A 439-amino-acid chain; its full sequence is Type 3 secretion system ATPase (439 aa).

172–177 (GGGKST) contributes to the ATP binding site.

It belongs to the ATPase alpha/beta chains family. T3SS ATPase subfamily. The core secretion machinery of the T3SS is composed of approximately 20 different proteins, including cytoplasmic components, a base, an export apparatus and a needle. This subunit is part of the cytosolic complex. Forms homohexamers.

It localises to the cytoplasm. The catalysed reaction is ATP + H2O + cellular proteinSide 1 = ADP + phosphate + cellular proteinSide 2.. Functionally, ATPase component of the type III secretion system (T3SS), also called injectisome, which is used to inject bacterial effector proteins into eukaryotic host cells. Acts as a molecular motor to provide the energy that is required for the export of proteins. Required for type III secretion apparatus (T3SA) formation, proper protein secretion, host cell invasion and virulence. May play a critical role in T3SS substrate recognition, disassembly of the effector/chaperone complex and unfolding of the effector in an ATP-dependent manner prior to secretion. The protein is Type 3 secretion system ATPase of Yersinia pseudotuberculosis serotype I (strain IP32953).